We begin with the raw amino-acid sequence, 815 residues long: Phosphatidylinositol 4-phosphate 5-kinase 9 (815 aa).

MORN repeat units follow at residues 58-80, 81-103, 104-126, 127-149, 150-172, 173-195, 196-218, and 219-240; these read YSGS…DGCV, YDGE…SGAS, YDGE…NKLT, YKGR…NGDV, FEGS…NKNV, YLGD…TGDS, YEGS…DGGC, and YVGT…AGTR. In terms of domain architecture, PIPK spans 391-809; that stretch reads GHRSYDLMLS…RFLEFIKKVF (419 aa). An activation loop region spans residues 769 to 790; sequence YNMTKKIEHAYKSLHFDSLSIS.

In terms of assembly, interacts with CINV1. In terms of tissue distribution, widely expressed.

It is found in the membrane. The protein localises to the nucleus. It carries out the reaction a 1,2-diacyl-sn-glycero-3-phospho-(1D-myo-inositol 4-phosphate) + ATP = a 1,2-diacyl-sn-glycero-3-phospho-(1D-myo-inositol-4,5-bisphosphate) + ADP + H(+). Its function is as follows. Plays a role in sugar-mediated root development. Interaction with CINV1 induces repression of CINV1 activity and negative regulation of sugar-mediated root cell elongation. The sequence is that of Phosphatidylinositol 4-phosphate 5-kinase 9 (PIP5K9) from Arabidopsis thaliana (Mouse-ear cress).